A 132-amino-acid polypeptide reads, in one-letter code: MLTLYTSPSCTSCRKARAWLQEHEIPFKERNIFSEPLNIEELKAILIMTEDGTEEIISTRSKVFQKLNMDLDELPLQDLLELVQENPGLLRRPIMIDEKRLQVGFNEDEIRRFLPRDVRQLELRQAQLMAGL.

C10 and C13 form a disulfide bridge.

This sequence belongs to the ArsC family. Spx subfamily. Interacts with the C-terminal domain of the alpha subunit of the RNAP.

The protein localises to the cytoplasm. Functionally, global transcriptional regulator that plays a key role in stress response and exerts either positive or negative regulation of genes. Acts by interacting with the C-terminal domain of the alpha subunit of the RNA polymerase (RNAP). This interaction can enhance binding of RNAP to the promoter region of target genes and stimulate their transcription, or block interaction of RNAP with activator. This Enterococcus faecalis (strain ATCC 700802 / V583) protein is Global transcriptional regulator Spx.